The following is a 219-amino-acid chain: Probable GTP-binding protein EngB (219 aa).

An EngB-type G domain is found at 26–200 (EGVEIAFAGR…RAKLDTWFAP (175 aa)). GTP-binding positions include 34–41 (GRSNAGKS), 61–65 (GRTQL), 79–82 (DLPG), 146–149 (TKAD), and 179–181 (FSS). The Mg(2+) site is built by Ser-41 and Thr-63.

This sequence belongs to the TRAFAC class TrmE-Era-EngA-EngB-Septin-like GTPase superfamily. EngB GTPase family. Mg(2+) serves as cofactor.

Necessary for normal cell division and for the maintenance of normal septation. This chain is Probable GTP-binding protein EngB, found in Vibrio parahaemolyticus serotype O3:K6 (strain RIMD 2210633).